The following is a 269-amino-acid chain: 3-methyl-2-oxobutanoate hydroxymethyltransferase (269 aa).

Residues D50 and D89 each contribute to the Mg(2+) site. 3-methyl-2-oxobutanoate contacts are provided by residues D50–S51, D89, and K119. A Mg(2+)-binding site is contributed by E121. E187 acts as the Proton acceptor in catalysis.

This sequence belongs to the PanB family. As to quaternary structure, homodecamer; pentamer of dimers. Mg(2+) is required as a cofactor.

It is found in the cytoplasm. The catalysed reaction is 3-methyl-2-oxobutanoate + (6R)-5,10-methylene-5,6,7,8-tetrahydrofolate + H2O = 2-dehydropantoate + (6S)-5,6,7,8-tetrahydrofolate. The protein operates within cofactor biosynthesis; (R)-pantothenate biosynthesis; (R)-pantoate from 3-methyl-2-oxobutanoate: step 1/2. In terms of biological role, catalyzes the reversible reaction in which hydroxymethyl group from 5,10-methylenetetrahydrofolate is transferred onto alpha-ketoisovalerate to form ketopantoate. The polypeptide is 3-methyl-2-oxobutanoate hydroxymethyltransferase (panB) (Corynebacterium glutamicum (strain ATCC 13032 / DSM 20300 / JCM 1318 / BCRC 11384 / CCUG 27702 / LMG 3730 / NBRC 12168 / NCIMB 10025 / NRRL B-2784 / 534)).